We begin with the raw amino-acid sequence, 143 residues long: MRGPELRLVLLALVLCQAPLGPAAPVSVGGGTVLAKMYPRGNHWAVGHLMGKKSTGESRHVLEGDGLKELLRDDIQWEEATRNLLGLIEAKGNSSHRSPQLKPLSTHQPTLDTEDSSNLKDVQLAKLVDYLLQGLKAKEGALS.

Residues 1-23 form the signal peptide; it reads MRGPELRLVLLALVLCQAPLGPA. A Methionine amide modification is found at Met50. A propeptide spanning residues 54-143 is cleaved from the precursor; it reads STGESRHVLE…GLKAKEGALS (90 aa). Residues 91–115 are disordered; it reads KGNSSHRSPQLKPLSTHQPTLDTED. A compositionally biased stretch (polar residues) spans 92–111; it reads GNSSHRSPQLKPLSTHQPTL.

This sequence belongs to the bombesin/neuromedin-B/ranatensin family.

It localises to the secreted. The protein resides in the cytoplasmic vesicle. Its subcellular location is the secretory vesicle lumen. The protein localises to the cell projection. It is found in the neuron projection. Its function is as follows. Stimulates the release of gastrin and other gastrointestinal hormones. Contributes to the perception of prurient stimuli and to the transmission of itch signals in the spinal cord that promote scratching behavior. Contributes primarily to nonhistaminergic itch sensation. In one study, shown to act in the amygdala as part of an inhibitory network which inhibits memory specifically related to learned fear. In another study, shown to act on vasoactive intestinal peptide (VIP)-expressing cells in the auditory cortex, most likely via extrasynaptic diffusion from local and long-range sources, to mediate disinhibition of glutamatergic cells via VIP cell-specific GRPR signaling which leads to enhanced auditory fear memories. Contributes to the regulation of food intake. Inhibits voltage-gated sodium channels but enhances voltage-gated potassium channels in hippocampal neurons. Induces sighing by acting directly on the pre-Botzinger complex, a cluster of several thousand neurons in the ventrolateral medulla responsible for inspiration during respiratory activity. Induces an itch response through activation of receptors present on mast cells, triggering mast cell degranulation. This chain is Gastrin-releasing peptide (GRP), found in Cavia porcellus (Guinea pig).